The sequence spans 338 residues: MDPETRGQEIIKVTPLQQMLASCTGAILTSVIVTPLDVVKIRLQAQNNPLPKGKCFVYSNGLMDHLCVCEEGGNKLWYKKPGNFQGTLDAFFKIIRNEGIKSLWSGLPPTLVMAVPATVIYFTCYDQLSALLRSKLGENETCIPIVAGIVARFGAVTVISPLELIRTKMQSKKFSYVELHRFVSKKVSEDGWISLWRGWAPTVLRDVPFSAMYWYNYEILKKWLCEKSGLYEPTFMINFTSGALSGSFAAVATLPFDVVKTQKQTQLWTYESHKISMPLHMSTWIIMKNIVAKNGFSGLFSGLIPRLIKIAPACAIMISTYEFGKAFFQKQNVRRQQY.

Solcar repeat units lie at residues 13-131, 139-223, and 233-327; these read VTPL…LSAL, NETC…LKKW, and PTFM…GKAF. 6 helical membrane-spanning segments follow: residues 19-39, 103-123, 142-162, 199-220, 239-259, and 298-318; these read MLAS…LDVV, LWSG…IYFT, CIPI…ISPL, WAPT…YEIL, FTSG…FDVV, and GLFS…AIMI.

The protein belongs to the mitochondrial carrier (TC 2.A.29) family.

It localises to the mitochondrion inner membrane. The enzyme catalyses glutathione(in) = glutathione(out). In terms of biological role, probable mitochondrial transporter required for glutathione import into mitochondria. Glutathione, which plays key roles in oxidative metabolism, is produced exclusively in the cytosol and is imported in many organelles. Mitochondrial glutathione is required for the activity and stability of proteins containing iron-sulfur clusters, as well as erythropoiesis. The polypeptide is Mitochondrial glutathione transporter SLC25A40 (Homo sapiens (Human)).